We begin with the raw amino-acid sequence, 214 residues long: uncharacterized protein (214 aa).

Residues 131-214 (TEDILSPPSP…SSSSDSLDAY (84 aa)) are disordered. Residues 174–189 (HRRRRTRRQLRYRQRV) are compositionally biased toward basic residues. Positions 197 to 214 (DLGEPLESSSSSDSLDAY) are enriched in low complexity.

This is an uncharacterized protein from Tupaia.